A 322-amino-acid polypeptide reads, in one-letter code: Secreted RxLR effector protein RXLR-C17 (322 aa).

The first 25 residues, 1-25, serve as a signal peptide directing secretion; it reads MREPAFSFRLHLFAAMILLVDVFSA. A RxLR-dEER motif is present at residues 43–62; that stretch reads RQLRARDSQAKNYVIRDEER. Residue Asn-73 is glycosylated (N-linked (GlcNAc...) asparagine).

This sequence belongs to the RxLR effector family.

It localises to the secreted. The protein localises to the host cytoplasm. It is found in the host nucleus. Its function is as follows. Secreted effector that suppresses pattern-triggered immunity (PTI) in plant host. This chain is Secreted RxLR effector protein RXLR-C17, found in Plasmopara halstedii (Downy mildew of sunflower).